Here is a 279-residue protein sequence, read N- to C-terminus: Lacto-N-neotetraose biosynthesis glycosyltransferase LgtB (279 aa).

This sequence belongs to the glycosyltransferase 25 family.

The protein operates within glycan metabolism; lacto-N-neotetraose biosynthesis. It functions in the pathway bacterial outer membrane biogenesis; lipooligosaccharide biosynthesis. Adds the second galactose to the lacto-N-tetraose chain in lipooligosaccharide (LOS). The polypeptide is Lacto-N-neotetraose biosynthesis glycosyltransferase LgtB (lgtB) (Neisseria gonorrhoeae).